We begin with the raw amino-acid sequence, 426 residues long: Dihydroorotase (426 aa).

Residues His58 and His60 each contribute to the Zn(2+) site. Residues 60-62 and Asn92 each bind substrate; that span reads HLR. Asp150, His177, and His230 together coordinate Zn(2+). Asn276 serves as a coordination point for substrate. Asp303 serves as a coordination point for Zn(2+). Asp303 is an active-site residue. Residues His307 and 321-322 contribute to the substrate site; that span reads FG.

Belongs to the metallo-dependent hydrolases superfamily. DHOase family. Class I DHOase subfamily. It depends on Zn(2+) as a cofactor.

It carries out the reaction (S)-dihydroorotate + H2O = N-carbamoyl-L-aspartate + H(+). It participates in pyrimidine metabolism; UMP biosynthesis via de novo pathway; (S)-dihydroorotate from bicarbonate: step 3/3. Catalyzes the reversible cyclization of carbamoyl aspartate to dihydroorotate. The chain is Dihydroorotase from Listeria monocytogenes serotype 4b (strain CLIP80459).